We begin with the raw amino-acid sequence, 309 residues long: Homoserine O-succinyltransferase (309 aa).

Residue Cys-142 is the Acyl-thioester intermediate of the active site. Substrate contacts are provided by Lys-163 and Ser-192. His-235 functions as the Proton acceptor in the catalytic mechanism. Glu-237 is a catalytic residue. Arg-249 provides a ligand contact to substrate.

Belongs to the MetA family. As to quaternary structure, homodimer.

It is found in the cytoplasm. It carries out the reaction L-homoserine + succinyl-CoA = O-succinyl-L-homoserine + CoA. The protein operates within amino-acid biosynthesis; L-methionine biosynthesis via de novo pathway; O-succinyl-L-homoserine from L-homoserine: step 1/1. Its function is as follows. Transfers a succinyl group from succinyl-CoA to L-homoserine, forming succinyl-L-homoserine. The chain is Homoserine O-succinyltransferase from Salmonella arizonae (strain ATCC BAA-731 / CDC346-86 / RSK2980).